The following is a 333-amino-acid chain: Phospholipid phosphatase-related protein type 1 (333 aa).

A run of 3 helical transmembrane segments spans residues 12-32 (IIPCFIFVELVIMAGTVLLAY), 66-86 (FIQPLILYCVVAAAPTAIIFV), and 126-146 (FIGVFAFGLFATDIFVNAGQV). N-linked (GlcNAc...) asparagine glycosylation is present at asparagine 162. Helical transmembrane passes span 200-217 (ASLSVYSAVYVTMYITST), 223-243 (SRLAKPVLCLGLLCAAFLTGL), and 256-276 (VVAGFILGSSIALFLGICVVN).

It belongs to the PA-phosphatase related phosphoesterase family.

The protein resides in the cell membrane. It localises to the cell projection. Its subcellular location is the neuron projection. Functionally, may play a role in neurite outgrowth and neurogenesis. This Danio rerio (Zebrafish) protein is Phospholipid phosphatase-related protein type 1 (plppr1).